A 339-amino-acid chain; its full sequence is Flap endonuclease 1 (339 aa).

The segment at 1 to 99 (MGVNLKEIVD…VAWEKRKKHK (99 aa)) is N-domain. Mg(2+)-binding residues include Asp-29, Asp-81, Glu-153, Glu-155, Asp-174, Asp-176, and Asp-237. The I-domain stretch occupies residues 117-258 (EAIKYAKSLG…TAIEIVKRFG (142 aa)). The tract at residues 329–337 (NQKTLFSFF) is interaction with PCNA.

This sequence belongs to the XPG/RAD2 endonuclease family. FEN1 subfamily. In terms of assembly, interacts with PCNA. PCNA stimulates the nuclease activity without altering cleavage specificity. The cofactor is Mg(2+).

Functionally, structure-specific nuclease with 5'-flap endonuclease and 5'-3' exonuclease activities involved in DNA replication and repair. During DNA replication, cleaves the 5'-overhanging flap structure that is generated by displacement synthesis when DNA polymerase encounters the 5'-end of a downstream Okazaki fragment. Binds the unpaired 3'-DNA end and kinks the DNA to facilitate 5' cleavage specificity. Cleaves one nucleotide into the double-stranded DNA from the junction in flap DNA, leaving a nick for ligation. Also involved in the base excision repair (BER) pathway. Acts as a genome stabilization factor that prevents flaps from equilibrating into structures that lead to duplications and deletions. Also possesses 5'-3' exonuclease activity on nicked or gapped double-stranded DNA. This chain is Flap endonuclease 1, found in Nanoarchaeum equitans (strain Kin4-M).